Here is a 397-residue protein sequence, read N- to C-terminus: Digeranylgeranylglycerophospholipid reductase (397 aa).

Residues A15, E34, C45, G46, G48, R101, A125, E163, D284, G296, and I297 each contribute to the FAD site. The a 2,3-bis-O-(geranylgeranyl)-sn-glycerol 1-phospholipid site is built by K339 and V375.

The protein belongs to the geranylgeranyl reductase family. DGGGPL reductase subfamily. Requires FAD as cofactor.

It carries out the reaction 2,3-bis-O-(phytanyl)-sn-glycerol 1-phosphate + 8 NADP(+) = 2,3-bis-O-(geranylgeranyl)-sn-glycerol 1-phosphate + 8 NADPH + 8 H(+). It catalyses the reaction 2,3-bis-O-(phytanyl)-sn-glycerol 1-phosphate + 8 NAD(+) = 2,3-bis-O-(geranylgeranyl)-sn-glycerol 1-phosphate + 8 NADH + 8 H(+). The enzyme catalyses a 2,3-bis-O-phytanyl-sn-glycerol 1-phospholipid + 8 A = a 2,3-bis-O-(geranylgeranyl)-sn-glycerol 1-phospholipid + 8 AH2. The catalysed reaction is CDP-2,3-bis-O-(geranylgeranyl)-sn-glycerol + 8 AH2 = CDP-2,3-bis-O-(phytanyl)-sn-glycerol + 8 A. It carries out the reaction archaetidylserine + 8 AH2 = 2,3-bis-O-phytanyl-sn-glycero-3-phospho-L-serine + 8 A. It functions in the pathway membrane lipid metabolism; glycerophospholipid metabolism. Is involved in the reduction of 2,3-digeranylgeranylglycerophospholipids (unsaturated archaeols) into 2,3-diphytanylglycerophospholipids (saturated archaeols) in the biosynthesis of archaeal membrane lipids. Catalyzes the formation of archaetidic acid (2,3-di-O-phytanyl-sn-glyceryl phosphate) from 2,3-di-O-geranylgeranylglyceryl phosphate (DGGGP) via the hydrogenation of each double bond of the isoprenoid chains. Is also probably able to reduce double bonds of geranyl groups in CDP-2,3-bis-O-(geranylgeranyl)-sn-glycerol and archaetidylserine, thus acting at various stages in the biosynthesis of archaeal membrane lipids. The polypeptide is Digeranylgeranylglycerophospholipid reductase (Picrophilus torridus (strain ATCC 700027 / DSM 9790 / JCM 10055 / NBRC 100828 / KAW 2/3)).